The following is a 395-amino-acid chain: Tyrosine--tRNA ligase (395 aa).

The 'HIGH' region signature appears at 42 to 51; sequence PTAPDIHLGH. The 'KMSKS' region motif lies at 226 to 230; the sequence is KMSKS. An ATP-binding site is contributed by lysine 229. In terms of domain architecture, S4 RNA-binding spans 334-394; the sequence is IAISNLLKDA…GKRKFARITL (61 aa).

The protein belongs to the class-I aminoacyl-tRNA synthetase family. TyrS type 2 subfamily. In terms of assembly, homodimer.

It localises to the cytoplasm. The catalysed reaction is tRNA(Tyr) + L-tyrosine + ATP = L-tyrosyl-tRNA(Tyr) + AMP + diphosphate + H(+). In terms of biological role, catalyzes the attachment of tyrosine to tRNA(Tyr) in a two-step reaction: tyrosine is first activated by ATP to form Tyr-AMP and then transferred to the acceptor end of tRNA(Tyr). This is Tyrosine--tRNA ligase from Photobacterium profundum (strain SS9).